We begin with the raw amino-acid sequence, 252 residues long: Ribosomal RNA small subunit methyltransferase NEP1 (252 aa).

S-adenosyl-L-methionine is bound by residues L180, G207, 212–214, and 227–232; these read GKD and LSNYPL.

It belongs to the class IV-like SAM-binding methyltransferase superfamily. RNA methyltransferase NEP1 family. As to quaternary structure, homodimer. Interacts with snoRNA U3. Interacts with NOP14 and MPP10. Component of the ribosomal small subunit (SSU) processome composed of at least 40 protein subunits and snoRNA U3.

It localises to the nucleus. It is found in the nucleolus. The enzyme catalyses pseudouridine(1191) in yeast 18S rRNA + S-adenosyl-L-methionine = N(1)-methylpseudouridine(1191) in yeast 18S rRNA + S-adenosyl-L-homocysteine + H(+). Its function is as follows. S-adenosyl-L-methionine-dependent pseudouridine N(1)-methyltransferase that methylates pseudouridine at position 1189 (Psi1189) in 18S rRNA. Involved the biosynthesis of the hypermodified N1-methyl-N3-(3-amino-3-carboxypropyl) pseudouridine (m1acp3-Psi) conserved in eukaryotic 18S rRNA. N1-methylation is independent on acp-modification at the N3-position of U1191. Also has an essential role in 40S ribosomal subunit biogenesis independent on its methyltransferase activity, facilitating the incorporation of ribosomal protein S19 (RPS19A/RPS19B) during the formation of pre-ribosomes. This is Ribosomal RNA small subunit methyltransferase NEP1 from Saccharomyces cerevisiae (strain ATCC 204508 / S288c) (Baker's yeast).